The primary structure comprises 73 residues: Probable cytochrome b-c1 complex subunit 8 (73 aa).

The Mitochondrial matrix segment spans residues 1–42 (MGQASKVFGKQITYSVSPFQQKLFVNYFKNAIPHLRRGVKDN). The helical transmembrane segment at 43-60 (FFCSVPYFAALYITVNWA) threads the bilayer. Topologically, residues 61–73 (NETYHNEMKDHWY) are mitochondrial intermembrane.

This sequence belongs to the UQCRQ/QCR8 family. Component of the ubiquinol-cytochrome c oxidoreductase (cytochrome b-c1 complex, complex III, CIII), a multisubunit enzyme composed of 3 respiratory subunits cytochrome b, cytochrome c1 and Rieske protein, 2 core protein subunits, and additional low-molecular weight protein subunits. The complex exists as an obligatory dimer and forms supercomplexes (SCs) in the inner mitochondrial membrane with cytochrome c oxidase (complex IV, CIV).

The protein resides in the mitochondrion inner membrane. Component of the ubiquinol-cytochrome c oxidoreductase, a multisubunit transmembrane complex that is part of the mitochondrial electron transport chain which drives oxidative phosphorylation. The respiratory chain contains 3 multisubunit complexes succinate dehydrogenase (complex II, CII), ubiquinol-cytochrome c oxidoreductase (cytochrome b-c1 complex, complex III, CIII) and cytochrome c oxidase (complex IV, CIV), that cooperate to transfer electrons derived from NADH and succinate to molecular oxygen, creating an electrochemical gradient over the inner membrane that drives transmembrane transport and the ATP synthase. The cytochrome b-c1 complex catalyzes electron transfer from ubiquinol to cytochrome c, linking this redox reaction to translocation of protons across the mitochondrial inner membrane, with protons being carried across the membrane as hydrogens on the quinol. In the process called Q cycle, 2 protons are consumed from the matrix, 4 protons are released into the intermembrane space and 2 electrons are passed to cytochrome c. The sequence is that of Probable cytochrome b-c1 complex subunit 8 from Dictyostelium discoideum (Social amoeba).